We begin with the raw amino-acid sequence, 158 residues long: Large ribosomal subunit protein uL15 (158 aa).

Residues 1–13 show a composition bias toward basic and acidic residues; sequence MKLNEIKDNEGST. The interval 1 to 45 is disordered; that stretch reads MKLNEIKDNEGSTHSRKRLGRGIGSGSGKTGGRGVKGQKSRSGVA. Gly residues predominate over residues 21–35; the sequence is RGIGSGSGKTGGRGV.

Belongs to the universal ribosomal protein uL15 family. In terms of assembly, part of the 50S ribosomal subunit.

In terms of biological role, binds to the 23S rRNA. The chain is Large ribosomal subunit protein uL15 from Rhizobium etli (strain CIAT 652).